The chain runs to 162 residues: UPF0114 protein PSEEN0819 (162 aa).

3 helical membrane-spanning segments follow: residues 15-35, 53-73, and 136-156; these read LLAP…LKFF, LVLV…LVMV, and LMWY…MGYL.

The protein belongs to the UPF0114 family.

The protein localises to the cell membrane. This Pseudomonas entomophila (strain L48) protein is UPF0114 protein PSEEN0819.